The sequence spans 107 residues: U1-lycotoxin-Ls1f (107 aa).

Positions 1–20 (MMKVLVVVALLVTLISYSSS) are cleaved as a signal peptide. The propeptide occupies 21–41 (EGIDDLEADELLSLMANEQTR). Cystine bridges form between C44/C59, C51/C68, C58/C86, and C70/C84.

This sequence belongs to the neurotoxin 19 (CSTX) family. 04 (U1-Lctx) subfamily. Expressed by the venom gland.

It is found in the secreted. The chain is U1-lycotoxin-Ls1f from Lycosa singoriensis (Wolf spider).